The chain runs to 126 residues: Phosphoribosyl-AMP cyclohydrolase (126 aa).

Mg(2+) is bound at residue Asp-74. Position 75 (Cys-75) interacts with Zn(2+). Positions 76 and 78 each coordinate Mg(2+). Zn(2+) contacts are provided by Cys-92 and Cys-99.

The protein belongs to the PRA-CH family. In terms of assembly, homodimer. Mg(2+) serves as cofactor. Zn(2+) is required as a cofactor.

It localises to the cytoplasm. The enzyme catalyses 1-(5-phospho-beta-D-ribosyl)-5'-AMP + H2O = 1-(5-phospho-beta-D-ribosyl)-5-[(5-phospho-beta-D-ribosylamino)methylideneamino]imidazole-4-carboxamide. The protein operates within amino-acid biosynthesis; L-histidine biosynthesis; L-histidine from 5-phospho-alpha-D-ribose 1-diphosphate: step 3/9. Its function is as follows. Catalyzes the hydrolysis of the adenine ring of phosphoribosyl-AMP. The sequence is that of Phosphoribosyl-AMP cyclohydrolase from Geotalea daltonii (strain DSM 22248 / JCM 15807 / FRC-32) (Geobacter daltonii).